A 688-amino-acid chain; its full sequence is Potassium-transporting ATPase ATP-binding subunit (688 aa).

Transmembrane regions (helical) follow at residues 37 to 57 (FLVY…LVGI), 65 to 85 (ILGI…AEAI), 219 to 239 (IALQ…TVSL), and 262 to 282 (VALL…SIGI). The 4-aspartylphosphate intermediate role is filled by Asp313. ATP is bound by residues Asp350, Glu354, 383–390 (FTAKTRMS), and Lys401. Residues Asp524 and Asp528 each contribute to the Mg(2+) site. 3 consecutive transmembrane segments (helical) span residues 594-614 (FAII…LNIM), 622-642 (AIFS…PLAL), and 668-688 (IIVP…IGIV).

The protein belongs to the cation transport ATPase (P-type) (TC 3.A.3) family. Type IA subfamily. In terms of assembly, the system is composed of three essential subunits: KdpA, KdpB and KdpC.

The protein localises to the cell membrane. It carries out the reaction K(+)(out) + ATP + H2O = K(+)(in) + ADP + phosphate + H(+). Its function is as follows. Part of the high-affinity ATP-driven potassium transport (or Kdp) system, which catalyzes the hydrolysis of ATP coupled with the electrogenic transport of potassium into the cytoplasm. This subunit is responsible for energy coupling to the transport system and for the release of the potassium ions to the cytoplasm. This chain is Potassium-transporting ATPase ATP-binding subunit, found in Clostridium botulinum (strain Eklund 17B / Type B).